Consider the following 129-residue polypeptide: Phosphoribosyl-AMP cyclohydrolase (129 aa).

D94 contacts Mg(2+). Residue C95 participates in Zn(2+) binding. D96 and D98 together coordinate Mg(2+). Residues C111 and C118 each contribute to the Zn(2+) site.

This sequence belongs to the PRA-CH family. As to quaternary structure, homodimer. The cofactor is Mg(2+). Zn(2+) is required as a cofactor.

The protein resides in the cytoplasm. The enzyme catalyses 1-(5-phospho-beta-D-ribosyl)-5'-AMP + H2O = 1-(5-phospho-beta-D-ribosyl)-5-[(5-phospho-beta-D-ribosylamino)methylideneamino]imidazole-4-carboxamide. Its pathway is amino-acid biosynthesis; L-histidine biosynthesis; L-histidine from 5-phospho-alpha-D-ribose 1-diphosphate: step 3/9. Catalyzes the hydrolysis of the adenine ring of phosphoribosyl-AMP. The protein is Phosphoribosyl-AMP cyclohydrolase of Corynebacterium efficiens (strain DSM 44549 / YS-314 / AJ 12310 / JCM 11189 / NBRC 100395).